The primary structure comprises 401 residues: Elongation factor Tu 1 (401 aa).

Positions 10–209 (KPHVNVGTIG…AVDEYIPTPV (200 aa)) constitute a tr-type G domain. Positions 19 to 26 (GHVDHGKT) are G1. 19–26 (GHVDHGKT) is a GTP binding site. Residue Thr26 participates in Mg(2+) binding. The interval 60 to 64 (GITIA) is G2. A G3 region spans residues 81–84 (DCPG). GTP contacts are provided by residues 81-85 (DCPGH) and 136-139 (NKVD). The G4 stretch occupies residues 136-139 (NKVD). A G5 region spans residues 174 to 176 (SAL).

This sequence belongs to the TRAFAC class translation factor GTPase superfamily. Classic translation factor GTPase family. EF-Tu/EF-1A subfamily. In terms of assembly, monomer.

It is found in the cytoplasm. It carries out the reaction GTP + H2O = GDP + phosphate + H(+). In terms of biological role, GTP hydrolase that promotes the GTP-dependent binding of aminoacyl-tRNA to the A-site of ribosomes during protein biosynthesis. This Roseiflexus castenholzii (strain DSM 13941 / HLO8) protein is Elongation factor Tu 1.